A 315-amino-acid polypeptide reads, in one-letter code: Lipoyl synthase (315 aa).

C62, C67, C73, C88, C92, C95, and S302 together coordinate [4Fe-4S] cluster. The Radical SAM core domain occupies 73-291 (CFGHGTATFM…GELAKKLGFS (219 aa)).

Belongs to the radical SAM superfamily. Lipoyl synthase family. It depends on [4Fe-4S] cluster as a cofactor.

The protein resides in the cytoplasm. The catalysed reaction is [[Fe-S] cluster scaffold protein carrying a second [4Fe-4S](2+) cluster] + N(6)-octanoyl-L-lysyl-[protein] + 2 oxidized [2Fe-2S]-[ferredoxin] + 2 S-adenosyl-L-methionine + 4 H(+) = [[Fe-S] cluster scaffold protein] + N(6)-[(R)-dihydrolipoyl]-L-lysyl-[protein] + 4 Fe(3+) + 2 hydrogen sulfide + 2 5'-deoxyadenosine + 2 L-methionine + 2 reduced [2Fe-2S]-[ferredoxin]. It functions in the pathway protein modification; protein lipoylation via endogenous pathway; protein N(6)-(lipoyl)lysine from octanoyl-[acyl-carrier-protein]: step 2/2. Catalyzes the radical-mediated insertion of two sulfur atoms into the C-6 and C-8 positions of the octanoyl moiety bound to the lipoyl domains of lipoate-dependent enzymes, thereby converting the octanoylated domains into lipoylated derivatives. In Coxiella burnetii (strain Dugway 5J108-111), this protein is Lipoyl synthase.